The following is a 562-amino-acid chain: Arginine--tRNA ligase 2 (562 aa).

The 'HIGH' region motif lies at 122-132 (PNIAKPFSMGH).

Belongs to the class-I aminoacyl-tRNA synthetase family. As to quaternary structure, monomer.

It is found in the cytoplasm. The enzyme catalyses tRNA(Arg) + L-arginine + ATP = L-arginyl-tRNA(Arg) + AMP + diphosphate. The sequence is that of Arginine--tRNA ligase 2 (argS2) from Bacillus anthracis.